The primary structure comprises 196 residues: Imidazoleglycerol-phosphate dehydratase (196 aa).

This sequence belongs to the imidazoleglycerol-phosphate dehydratase family.

The protein resides in the cytoplasm. The catalysed reaction is D-erythro-1-(imidazol-4-yl)glycerol 3-phosphate = 3-(imidazol-4-yl)-2-oxopropyl phosphate + H2O. It functions in the pathway amino-acid biosynthesis; L-histidine biosynthesis; L-histidine from 5-phospho-alpha-D-ribose 1-diphosphate: step 6/9. This chain is Imidazoleglycerol-phosphate dehydratase, found in Ralstonia pickettii (strain 12J).